A 298-amino-acid chain; its full sequence is Phosphatidylglycerol--prolipoprotein diacylglyceryl transferase (298 aa).

Transmembrane regions (helical) follow at residues 17 to 37, 59 to 79, and 97 to 117; these read LAVR…IVVG, MMFY…VLFY, and GGMS…LFAW. R142 is an a 1,2-diacyl-sn-glycero-3-phospho-(1'-sn-glycerol) binding site. Helical transmembrane passes span 230–250 and 257–277; these read MGAI…TVEF and FLGL…PMIV.

This sequence belongs to the Lgt family.

It localises to the cell inner membrane. The enzyme catalyses L-cysteinyl-[prolipoprotein] + a 1,2-diacyl-sn-glycero-3-phospho-(1'-sn-glycerol) = an S-1,2-diacyl-sn-glyceryl-L-cysteinyl-[prolipoprotein] + sn-glycerol 1-phosphate + H(+). Its pathway is protein modification; lipoprotein biosynthesis (diacylglyceryl transfer). In terms of biological role, catalyzes the transfer of the diacylglyceryl group from phosphatidylglycerol to the sulfhydryl group of the N-terminal cysteine of a prolipoprotein, the first step in the formation of mature lipoproteins. The protein is Phosphatidylglycerol--prolipoprotein diacylglyceryl transferase of Burkholderia cenocepacia (strain ATCC BAA-245 / DSM 16553 / LMG 16656 / NCTC 13227 / J2315 / CF5610) (Burkholderia cepacia (strain J2315)).